A 754-amino-acid polypeptide reads, in one-letter code: MESSDVELDLQRSVQAVLRELSTQAPALQSNQGMWRWSLHKKVERDPGKSPVLVRILLRELEKAESQDLRHVIIPLLHTVMYVLTKATGITEELYQRIYAFCTRLLTLPTPYCTVALDCAIRLKTEMAVPGTLYQRMVIAEQNLTNELYPYQERVFLFVDPELVSASVCSALLLEIEAAQAQQTPETCMRHVVSHALQAALGEACHAGALHRKLQASPRRTLEHYFHAVVAALEQMASEASPSREGHVERLEEIYCSLLGPAAGRCGGDLVQERPPSIPLPSPYITFHLWTGEEQLWKELVLFLRPRSQLRLSADLEVLDLQGLRPDRELARVSVLSTDSGIERDLPTGADELPAPGSPEMERAGLQRKGGIKKRAWPLDFLMPGSWDGPPGLHRRTGRPSGDGEMLPGVSRLHTARVLVLGDDRMLGRLAQAYHRLRKRETQKFCLTPRLSLQLYYIPVLAPEKPAASRQPELGELATFLGRVDPWYQSNVNTLCPAIHKLAEMPPSLDTSRTVDPFILDVITYYIRMGTQPIYFQIYTVKIFFSDLSQDPTEDIFLIELKVKIQDSKFPKDGFSPRRRGVAEGPGAELSLCYQKALLSHRPREVTVSLRATGLILKAIPASDTEVSGSSHCPLPAAPVTDHTCLNVNVTEVVKSSNLAGKSFSTVTNTFRTNNIQIQSRDQRLLTLSLDKDDQRTFRDVVRFEVAPCPEPCSGAQKSKAPWLNLHGQQEVEAIKAKPKPLLMPINTFSGIVQ.

Residues 343–363 (ERDLPTGADELPAPGSPEMER) form a disordered region.

Heterodimer of a catalytic subunit (PIK3CG) and a regulatory (PIK3R6) subunit. The binding of PIK3R6 to PIK3CG may exclude the binding of PIK3R5 to PIK3CG. Interacts with beta-gamma G protein dimers. Interacts with PDE3B and RAPGEF3; form a signaling complex that regulates phosphatidylinositol 3-kinase gamma in angiogenesis.

It is found in the cytoplasm. It localises to the cell membrane. Its function is as follows. Regulatory subunit of the PI3K gamma complex. Acts as an adapter to drive activation of PIK3CG by beta-gamma G protein dimers. The PIK3CG:PIK3R6 heterodimer is much less sensitive to beta-gamma G protein dimers than PIK3CG:PIK3R5 and its membrane recruitment and beta-gamma G protein dimer-dependent activation requires HRAS bound to PIK3CG. Recruits of the PI3K gamma complex to a PDE3B:RAPGEF3 signaling complex involved in angiogenesis; signaling seems to involve RRAS. The chain is Phosphoinositide 3-kinase regulatory subunit 6 (PIK3R6) from Homo sapiens (Human).